The primary structure comprises 207 residues: Sodium/potassium-transporting ATPase subunit beta-1-interacting protein 1 (207 aa).

An N-terminal signal peptide occupies residues 1-21; it reads MGKCSGRCTLVAFCCLQLVAA. The Extracellular segment spans residues 22 to 34; that stretch reads LERQIFDFLGYQW. A helical transmembrane segment spans residues 35 to 55; sequence APILANFLHIMAVILGIFGTV. The Cytoplasmic segment spans residues 56-61; it reads QYRSRY. A helical membrane pass occupies residues 62-82; that stretch reads LILYAAWLVLWVGWNAFIICF. Over 83–146 the chain is Extracellular; the sequence is YLEVGQLSQD…GCLLDYPYIE (64 aa). Asn100 is a glycosylation site (N-linked (GlcNAc...) asparagine). Residues 147 to 167 traverse the membrane as a helical segment; that stretch reads ALSSALQIFLALFGFVFACYV. At 168-207 the chain is on the cytoplasmic side; it reads SKVFLEEEDSFDFIGGFDSYGYQAPQKTSHLQLQPLYTSG.

It belongs to the NKAIN family. As to quaternary structure, interacts with ATP1B1 C-terminus.

The protein resides in the cell membrane. The protein is Sodium/potassium-transporting ATPase subunit beta-1-interacting protein 1 (NKAIN1) of Homo sapiens (Human).